The sequence spans 201 residues: Large ribosomal subunit protein bL25 (201 aa).

Belongs to the bacterial ribosomal protein bL25 family. CTC subfamily. As to quaternary structure, part of the 50S ribosomal subunit; part of the 5S rRNA/L5/L18/L25 subcomplex. Contacts the 5S rRNA. Binds to the 5S rRNA independently of L5 and L18.

In terms of biological role, this is one of the proteins that binds to the 5S RNA in the ribosome where it forms part of the central protuberance. This is Large ribosomal subunit protein bL25 from Burkholderia lata (strain ATCC 17760 / DSM 23089 / LMG 22485 / NCIMB 9086 / R18194 / 383).